Consider the following 75-residue polypeptide: Large ribosomal subunit protein bL28 (75 aa).

Belongs to the bacterial ribosomal protein bL28 family.

This chain is Large ribosomal subunit protein bL28, found in Baumannia cicadellinicola subsp. Homalodisca coagulata.